The following is a 572-amino-acid chain: MGLLSYILLGFTHPSELRAMIGYKVWRDPLNDIKANPQASGWDRQRMRDCWGFLDLTSRSFAAVIKELKGELSRVICLFYLVLRALDTVEDDMTIPAQRKIPLLVNFYKYLEQPGWNFTESGPNEKDRQLLVEFDKVIAEYQLLDVGYKTVISDITAKMGAGMASYIELSAKGPLKVAMWKHFDLYCHFVAGLVGEGLSRLFSESKLERPWLGHQLELSNHMGLFLQKTNIIRDYAEDCEEGRYFWPQQCWGDDFAKFESQPDVAKGIIEIKPGHFRPADNELGQRSMYVLSSMLLDAMSHATHALDYLALLKEQSVFNFCAIPQVMAIATLELMFNNPDVFKKNVKIRKGVAVGLILRAVNPRDVAYTFLHYSRKMHARLSPADPNFTRWSVELARIEQWCETYYPSFIAAASEGKPTDIRANALRSWSESRRTQALILKQAKLNGSDASTLDAKSVLEAAQNSALDPRDLMTEDERAAQDKRDRDQMVKFFLIILVGMVTFMGIVALITWEIVWWWTMDTPDPLSVYVKHAYYLVKTQGWSTVKEVLRTTRLSFEHVWKHGLTSPPKLEL.

Helical transmembrane passes span 316–336 (SVFNFCAIPQVMAIATLELMF) and 492–512 (FFLIILVGMVTFMGIVALITW).

Belongs to the phytoene/squalene synthase family. Monomer. The cofactor is Mg(2+).

It localises to the endoplasmic reticulum membrane. The catalysed reaction is 2 (2E,6E)-farnesyl diphosphate + NADPH + H(+) = squalene + 2 diphosphate + NADP(+). The enzyme catalyses 2 (2E,6E)-farnesyl diphosphate + NADH + H(+) = squalene + 2 diphosphate + NAD(+). Its pathway is terpene metabolism; lanosterol biosynthesis; lanosterol from farnesyl diphosphate: step 1/3. Functionally, catalyzes the condensation of 2 two farnesyl pyrophosphate moieties to form squalene. It is the first committed enzyme of the sterol biosynthesis pathway. Required for the biosynthesis of ergosterol. This is Squalene synthase (ERG9) from Mycosarcoma maydis (Corn smut fungus).